A 420-amino-acid polypeptide reads, in one-letter code: Serine--tRNA ligase (420 aa).

L-serine is bound at residue 227–229 (TSE). Residues 258–260 (RRE) and valine 274 contribute to the ATP site. Glutamate 281 lines the L-serine pocket. Residue 345-348 (ELTS) coordinates ATP. Threonine 380 contacts L-serine.

Belongs to the class-II aminoacyl-tRNA synthetase family. Type-1 seryl-tRNA synthetase subfamily. As to quaternary structure, homodimer. The tRNA molecule binds across the dimer.

It is found in the cytoplasm. The enzyme catalyses tRNA(Ser) + L-serine + ATP = L-seryl-tRNA(Ser) + AMP + diphosphate + H(+). The catalysed reaction is tRNA(Sec) + L-serine + ATP = L-seryl-tRNA(Sec) + AMP + diphosphate + H(+). The protein operates within aminoacyl-tRNA biosynthesis; selenocysteinyl-tRNA(Sec) biosynthesis; L-seryl-tRNA(Sec) from L-serine and tRNA(Sec): step 1/1. Catalyzes the attachment of serine to tRNA(Ser). Is also able to aminoacylate tRNA(Sec) with serine, to form the misacylated tRNA L-seryl-tRNA(Sec), which will be further converted into selenocysteinyl-tRNA(Sec). The chain is Serine--tRNA ligase from Nocardia farcinica (strain IFM 10152).